We begin with the raw amino-acid sequence, 358 residues long: 4-hydroxybenzoate polyprenyltransferase, mitochondrial (358 aa).

A mitochondrion-targeting transit peptide spans 1–20 (MIIKPIASPARYFLRTPSWS). Transmembrane regions (helical) follow at residues 76 to 96 (TGTY…AYAY), 107 to 127 (LALF…INDL), 154 to 174 (AISL…QLNP), 202 to 222 (VVLG…LAGE), 229 to 249 (VVAP…TIYA), 275 to 295 (VLCG…IMNG), and 336 to 356 (NTGY…SFIY).

The protein belongs to the UbiA prenyltransferase family. Mg(2+) is required as a cofactor.

The protein resides in the mitochondrion. It is found in the mitochondrion inner membrane. The catalysed reaction is an all-trans-polyprenyl diphosphate + 4-hydroxybenzoate = a 4-hydroxy-3-(all-trans-polyprenyl)benzoate + diphosphate. It participates in cofactor biosynthesis; ubiquinone biosynthesis. Catalyzes the prenylation of para-hydroxybenzoate (PHB) with an all-trans polyprenyl group. Mediates the second step in the final reaction sequence of coenzyme Q (CoQ) biosynthesis, which is the condensation of the polyisoprenoid side chain with PHB, generating the first membrane-bound Q intermediate. This chain is 4-hydroxybenzoate polyprenyltransferase, mitochondrial, found in Schizosaccharomyces pombe (strain 972 / ATCC 24843) (Fission yeast).